Here is a 156-residue protein sequence, read N- to C-terminus: Small ribosomal subunit protein uS7 (156 aa).

The protein belongs to the universal ribosomal protein uS7 family. As to quaternary structure, part of the 30S ribosomal subunit. Contacts proteins S9 and S11.

Its function is as follows. One of the primary rRNA binding proteins, it binds directly to 16S rRNA where it nucleates assembly of the head domain of the 30S subunit. Is located at the subunit interface close to the decoding center, probably blocks exit of the E-site tRNA. The sequence is that of Small ribosomal subunit protein uS7 from Thermobifida fusca (strain YX).